A 227-amino-acid chain; its full sequence is ATP synthase F(0) complex subunit a (227 aa).

Transmembrane regions (helical) follow at residues 14 to 34 (LLGHPLILLSLLLPALLFPSP), 69 to 89 (WALMLTSLMTMLLTINLLGLL), 98 to 118 (QLSMNMALAFPLWLATLLTGL), 139 to 159 (IPALILIETTSLLIRPLALGV), 167 to 187 (AGHLLIQLISTASIALKPILP), and 190 to 210 (SILTMAILLLLTILEVAVAMI).

It belongs to the ATPase A chain family. As to quaternary structure, component of the ATP synthase complex composed at least of ATP5F1A/subunit alpha, ATP5F1B/subunit beta, ATP5MC1/subunit c (homooctomer), MT-ATP6/subunit a, MT-ATP8/subunit 8, ATP5ME/subunit e, ATP5MF/subunit f, ATP5MG/subunit g, ATP5MK/subunit k, ATP5MJ/subunit j, ATP5F1C/subunit gamma, ATP5F1D/subunit delta, ATP5F1E/subunit epsilon, ATP5PF/subunit F6, ATP5PB/subunit b, ATP5PD/subunit d, ATP5PO/subunit OSCP. ATP synthase complex consists of a soluble F(1) head domain (subunits alpha(3) and beta(3)) - the catalytic core - and a membrane F(0) domain - the membrane proton channel (subunits c, a, 8, e, f, g, k and j). These two domains are linked by a central stalk (subunits gamma, delta, and epsilon) rotating inside the F1 region and a stationary peripheral stalk (subunits F6, b, d, and OSCP). Interacts with DNAJC30; interaction is direct.

It is found in the mitochondrion inner membrane. It carries out the reaction H(+)(in) = H(+)(out). Its function is as follows. Subunit a, of the mitochondrial membrane ATP synthase complex (F(1)F(0) ATP synthase or Complex V) that produces ATP from ADP in the presence of a proton gradient across the membrane which is generated by electron transport complexes of the respiratory chain. ATP synthase complex consist of a soluble F(1) head domain - the catalytic core - and a membrane F(1) domain - the membrane proton channel. These two domains are linked by a central stalk rotating inside the F(1) region and a stationary peripheral stalk. During catalysis, ATP synthesis in the catalytic domain of F(1) is coupled via a rotary mechanism of the central stalk subunits to proton translocation. With the subunit c (ATP5MC1), forms the proton-conducting channel in the F(0) domain, that contains two crucial half-channels (inlet and outlet) that facilitate proton movement from the mitochondrial intermembrane space (IMS) into the matrix. Protons are taken up via the inlet half-channel and released through the outlet half-channel, following a Grotthuss mechanism. The protein is ATP synthase F(0) complex subunit a of Anas platyrhynchos (Mallard).